Here is a 426-residue protein sequence, read N- to C-terminus: Serine--tRNA ligase (426 aa).

233-235 is a binding site for L-serine; that stretch reads TAE. An ATP-binding site is contributed by 264–266; the sequence is RAE. L-serine is bound at residue E287. An ATP-binding site is contributed by 351 to 354; the sequence is EISS. An L-serine-binding site is contributed by S387.

Belongs to the class-II aminoacyl-tRNA synthetase family. Type-1 seryl-tRNA synthetase subfamily. Homodimer. The tRNA molecule binds across the dimer.

It is found in the cytoplasm. It catalyses the reaction tRNA(Ser) + L-serine + ATP = L-seryl-tRNA(Ser) + AMP + diphosphate + H(+). The catalysed reaction is tRNA(Sec) + L-serine + ATP = L-seryl-tRNA(Sec) + AMP + diphosphate + H(+). Its pathway is aminoacyl-tRNA biosynthesis; selenocysteinyl-tRNA(Sec) biosynthesis; L-seryl-tRNA(Sec) from L-serine and tRNA(Sec): step 1/1. Catalyzes the attachment of serine to tRNA(Ser). Is also able to aminoacylate tRNA(Sec) with serine, to form the misacylated tRNA L-seryl-tRNA(Sec), which will be further converted into selenocysteinyl-tRNA(Sec). This is Serine--tRNA ligase from Clostridium novyi (strain NT).